Reading from the N-terminus, the 213-residue chain is Adenylate kinase (213 aa).

An ATP-binding site is contributed by Gly10–Ser15. The interval Ser30 to Val60 is NMP. AMP-binding positions include Thr31, Arg36, Lys58–Val60, Gly87–Arg90, and Gln94. Residues Gly123–Asp160 are LID. Arg124 serves as a coordination point for ATP. 2 residues coordinate Zn(2+): Cys127 and Cys130. Ile133–Tyr134 lines the ATP pocket. Zn(2+) contacts are provided by Cys147 and Asp150. Positions 157 and 168 each coordinate AMP. Residue Gln196 coordinates ATP.

This sequence belongs to the adenylate kinase family. Monomer.

Its subcellular location is the cytoplasm. The enzyme catalyses AMP + ATP = 2 ADP. The protein operates within purine metabolism; AMP biosynthesis via salvage pathway; AMP from ADP: step 1/1. Catalyzes the reversible transfer of the terminal phosphate group between ATP and AMP. Plays an important role in cellular energy homeostasis and in adenine nucleotide metabolism. The polypeptide is Adenylate kinase (Ureaplasma urealyticum serovar 10 (strain ATCC 33699 / Western)).